The sequence spans 120 residues: Large ribosomal subunit protein bL19 (120 aa).

This sequence belongs to the bacterial ribosomal protein bL19 family.

Its function is as follows. This protein is located at the 30S-50S ribosomal subunit interface and may play a role in the structure and function of the aminoacyl-tRNA binding site. This chain is Large ribosomal subunit protein bL19, found in Chlorobium phaeobacteroides (strain DSM 266 / SMG 266 / 2430).